Consider the following 445-residue polypeptide: Maltoporin (445 aa).

Positions 1–25 are cleaved as a signal peptide; sequence MKMKAKWLPIAAGVTAALASQAAFA.

It belongs to the porin LamB (TC 1.B.3) family. As to quaternary structure, homotrimer formed of three 18-stranded antiparallel beta-barrels, containing three independent channels.

Its subcellular location is the cell outer membrane. The catalysed reaction is beta-maltose(in) = beta-maltose(out). Its function is as follows. Involved in the transport of maltose and maltodextrins. In Aeromonas salmonicida, this protein is Maltoporin.